Reading from the N-terminus, the 200-residue chain is Glycerol-3-phosphate acyltransferase (200 aa).

5 consecutive transmembrane segments (helical) span residues 2–22 (FNIP…AVIV), 51–71 (KAAA…VLLA), 84–104 (AIAA…FFGF), 114–134 (LGVL…IWLV), and 158–178 (LFFM…ILVL).

It belongs to the PlsY family. Probably interacts with PlsX.

It localises to the cell inner membrane. It carries out the reaction an acyl phosphate + sn-glycerol 3-phosphate = a 1-acyl-sn-glycero-3-phosphate + phosphate. Its pathway is lipid metabolism; phospholipid metabolism. Its function is as follows. Catalyzes the transfer of an acyl group from acyl-phosphate (acyl-PO(4)) to glycerol-3-phosphate (G3P) to form lysophosphatidic acid (LPA). This enzyme utilizes acyl-phosphate as fatty acyl donor, but not acyl-CoA or acyl-ACP. This is Glycerol-3-phosphate acyltransferase from Neisseria meningitidis serogroup A / serotype 4A (strain DSM 15465 / Z2491).